Here is a 165-residue protein sequence, read N- to C-terminus: Type II secretion system protein M (165 aa).

The Cytoplasmic segment spans residues 1 to 22; it reads MKELLAPVQAWWRSVTPREQKM. Residues 23 to 43 traverse the membrane as a helical segment; that stretch reads VMGMGALTVLAIAYWGIWQPL. The Periplasmic segment spans residues 44–165; that stretch reads SERTAQAQAR…VKRLQLKRGG (122 aa).

This sequence belongs to the GSP M family. As to quaternary structure, type II secretion system is composed of four main components: the outer membrane complex, the inner membrane complex, the cytoplasmic secretion ATPase and the periplasm-spanning pseudopilus. Forms homodimers. Interacts with EpsL/GspL. Interacts with EpsE/GspE. Interacts with EpsF/GspF.

The protein resides in the cell inner membrane. In terms of biological role, inner membrane component of the type II secretion system required for the energy-dependent secretion of extracellular factors such as proteases and toxins from the periplasm. Plays a role in the complex assembly and recruits EpsL resulting in a stable complex in the inner membrane. Provides thus a link between the energy-providing EpsE protein in the cytoplasm and the rest of the T2SS machinery. The polypeptide is Type II secretion system protein M (epsM) (Vibrio cholerae serotype O1 (strain ATCC 39315 / El Tor Inaba N16961)).